Consider the following 435-residue polypeptide: C4-dicarboxylate transport protein (435 aa).

A run of 9 helical transmembrane segments spans residues 4–24 (SLFKSLYFQVLTAIAIGILLG), 44–64 (LIKMIIAPVIFCTVVTGIAGM), 76–96 (VALLYFEIVSTIALIIGLIIV), 142–162 (IGAFASGNILQVLLFAVLFGF), 184–204 (VIFGIINMIMRLAPIGAFGAM), 222–242 (LIICFYITCILFVVVVLGTIA), 289–309 (VVGLVIPTGYSFNLDGTSIYL), 326–346 (IFHQITLLVVLLLSSKGVAGV), and 352–372 (IVLAATISAVGHLPVAGLALI).

It belongs to the dicarboxylate/amino acid:cation symporter (DAACS) (TC 2.A.23) family.

It localises to the cell inner membrane. Functionally, responsible for the transport of dicarboxylates such as succinate, fumarate, and malate from the periplasm across the membrane. This is C4-dicarboxylate transport protein from Salmonella paratyphi A (strain ATCC 9150 / SARB42).